The following is a 1358-amino-acid chain: Mediator of RNA polymerase II transcription subunit 12 (1358 aa).

The stretch at 629–654 (VRYNYEQLQIQLNTAKEQMLQEQFEH) forms a coiled coil.

It belongs to the Mediator complex subunit 12 family. Component of the SRB8-11 complex, which itself associates with the Mediator complex.

The protein resides in the nucleus. In terms of biological role, component of the SRB8-11 complex. The SRB8-11 complex is a regulatory module of the Mediator complex which is itself involved in regulation of basal and activated RNA polymerase II-dependent transcription. The SRB8-11 complex may be involved in the transcriptional repression of a subset of genes regulated by Mediator. It may inhibit the association of the Mediator complex with RNA polymerase II to form the holoenzyme complex. This is Mediator of RNA polymerase II transcription subunit 12 (SRB8) from Eremothecium gossypii (strain ATCC 10895 / CBS 109.51 / FGSC 9923 / NRRL Y-1056) (Yeast).